The primary structure comprises 120 residues: Aspartate 1-decarboxylase (120 aa).

The active-site Schiff-base intermediate with substrate; via pyruvic acid is the Ser-25. At Ser-25 the chain carries Pyruvic acid (Ser). Position 57 (Thr-57) interacts with substrate. Catalysis depends on Tyr-58, which acts as the Proton donor. A substrate-binding site is contributed by 72-74 (GAA).

It belongs to the PanD family. In terms of assembly, heterooctamer of four alpha and four beta subunits. Pyruvate serves as cofactor. Post-translationally, is synthesized initially as an inactive proenzyme, which is activated by self-cleavage at a specific serine bond to produce a beta-subunit with a hydroxyl group at its C-terminus and an alpha-subunit with a pyruvoyl group at its N-terminus.

The protein localises to the cytoplasm. It carries out the reaction L-aspartate + H(+) = beta-alanine + CO2. Its pathway is cofactor biosynthesis; (R)-pantothenate biosynthesis; beta-alanine from L-aspartate: step 1/1. In terms of biological role, catalyzes the pyruvoyl-dependent decarboxylation of aspartate to produce beta-alanine. In Helicobacter hepaticus (strain ATCC 51449 / 3B1), this protein is Aspartate 1-decarboxylase.